The sequence spans 437 residues: Probable peptidoglycan-N-acetylglucosamine deacetylase ARB_03699 (437 aa).

The first 20 residues, 1–20 (MLMRLYTFFAAALLACCAAA), serve as a signal peptide directing secretion. Positions 47-132 (STRAATTTTT…STSAAAPSTP (86 aa)) are disordered. Asn99 carries N-linked (GlcNAc...) asparagine glycosylation. A NodB homology domain is found at 149–334 (GTVAITFDDG…EVKRRGLKAV (186 aa)). Asp156 serves as the catalytic Proton acceptor. Residues Asp157, His209, and His213 each contribute to the Zn(2+) site. Residue Tyr251 coordinates substrate. The Proton donor role is filled by His308. Over residues 350–370 (TTPVQVPTGTSTTSPTATPTS) the composition is skewed to low complexity. The tract at residues 350–384 (TTPVQVPTGTSTTSPTATPTSPGTPPPAPTQPGVA) is disordered. A LysM domain is found at 389–435 (KWHTVVSGDTCYDIAAANGISLDNLYKWNPAVGTSCASLWLGYAVCV).

Zn(2+) is required as a cofactor. The cofactor is Co(2+).

The protein resides in the secreted. The enzyme catalyses peptidoglycan-N-acetyl-D-glucosamine + H2O = peptidoglycan-D-glucosamine + acetate.. In terms of biological role, catalyzes the deacetylation of N-acetylglucosamine (GlcNAc) residues in peptidoglycan. This Arthroderma benhamiae (strain ATCC MYA-4681 / CBS 112371) (Trichophyton mentagrophytes) protein is Probable peptidoglycan-N-acetylglucosamine deacetylase ARB_03699.